The chain runs to 300 residues: ClpXP adapter protein SpxH (300 aa).

Belongs to the SpxH family. In terms of assembly, interacts with Spx.

It localises to the cytoplasm. Functionally, adapter protein required for efficient degradation of Spx by ClpXP under non-stress conditions. Interaction with Spx stabilizes Spx and exposes the C-terminus of Spx for recognition and proteolysis by ClpXP. In Bacillus licheniformis (strain ATCC 14580 / DSM 13 / JCM 2505 / CCUG 7422 / NBRC 12200 / NCIMB 9375 / NCTC 10341 / NRRL NRS-1264 / Gibson 46), this protein is ClpXP adapter protein SpxH.